Here is a 100-residue protein sequence, read N- to C-terminus: Large ribosomal subunit protein uL23 (100 aa).

Belongs to the universal ribosomal protein uL23 family. As to quaternary structure, part of the 50S ribosomal subunit. Contacts protein L29, and trigger factor when it is bound to the ribosome.

Functionally, one of the early assembly proteins it binds 23S rRNA. One of the proteins that surrounds the polypeptide exit tunnel on the outside of the ribosome. Forms the main docking site for trigger factor binding to the ribosome. The chain is Large ribosomal subunit protein uL23 from Pseudoalteromonas translucida (strain TAC 125).